We begin with the raw amino-acid sequence, 178 residues long: RNA replicase polyprotein (178 aa).

Belongs to the tymovirus NS35 RNA replicase polyprotein family.

The enzyme catalyses RNA(n) + a ribonucleoside 5'-triphosphate = RNA(n+1) + diphosphate. The chain is RNA replicase polyprotein from Physalis heterophylla (PhMV).